The sequence spans 404 residues: MKLPIYLDYSATTPVDPRVAEKMMQCLTLDGTFGNPASRSHRFGWQAEEAVDIARNQIAELVGADPREIVFTSGATEADNLAIKGAANFYQKKGKHIITSKTEHKAVLDTCRQLEREGFDVTYLAPQRNGIIDLVELEAAMREDTILVSIMHVNNEIGVVQDIAAIGEMCRSRGIVFHVDATQSVGKLPIDLSQLKVDLMSFSGHKIYGPKGIGALYVRRKPRIRLEAQMHGGGHERGMRSGTLPVHQIVGMGEAYRIAKEEMTAEMDRLSMLRDRLWNGINDIEEVYLNGDIEQGVPNILNVSFNYVEGESLIMALKDLAVSSGSACTSASLEPSYVLRALGMNDELAHSSIRFSLGRFTTEEEIDYTIELVRKSIGRLRDLSPLWEMFKQGVDISSIEWAHH.

Residues 75–76 (AT), N155, Q183, and 203–205 (SGH) each bind pyridoxal 5'-phosphate. At K206 the chain carries N6-(pyridoxal phosphate)lysine. T243 contacts pyridoxal 5'-phosphate. Residue C328 is the Cysteine persulfide intermediate of the active site. C328 is a binding site for [2Fe-2S] cluster.

The protein belongs to the class-V pyridoxal-phosphate-dependent aminotransferase family. NifS/IscS subfamily. As to quaternary structure, homodimer. Forms a heterotetramer with IscU, interacts with other sulfur acceptors. The cofactor is pyridoxal 5'-phosphate.

Its subcellular location is the cytoplasm. The enzyme catalyses (sulfur carrier)-H + L-cysteine = (sulfur carrier)-SH + L-alanine. It functions in the pathway cofactor biosynthesis; iron-sulfur cluster biosynthesis. Its function is as follows. Master enzyme that delivers sulfur to a number of partners involved in Fe-S cluster assembly, tRNA modification or cofactor biosynthesis. Catalyzes the removal of elemental sulfur atoms from cysteine to produce alanine. Functions as a sulfur delivery protein for Fe-S cluster synthesis onto IscU, an Fe-S scaffold assembly protein, as well as other S acceptor proteins. In Pectobacterium atrosepticum (strain SCRI 1043 / ATCC BAA-672) (Erwinia carotovora subsp. atroseptica), this protein is Cysteine desulfurase IscS.